A 523-amino-acid polypeptide reads, in one-letter code: ATP synthase subunit alpha (523 aa).

179 to 186 (GDRQTGKT) contributes to the ATP binding site.

The protein belongs to the ATPase alpha/beta chains family. F-type ATPases have 2 components, CF(1) - the catalytic core - and CF(0) - the membrane proton channel. CF(1) has five subunits: alpha(3), beta(3), gamma(1), delta(1), epsilon(1). CF(0) has three main subunits: a(1), b(2) and c(9-12). The alpha and beta chains form an alternating ring which encloses part of the gamma chain. CF(1) is attached to CF(0) by a central stalk formed by the gamma and epsilon chains, while a peripheral stalk is formed by the delta and b chains.

Its subcellular location is the cell inner membrane. The enzyme catalyses ATP + H2O + 4 H(+)(in) = ADP + phosphate + 5 H(+)(out). Produces ATP from ADP in the presence of a proton gradient across the membrane. The alpha chain is a regulatory subunit. The polypeptide is ATP synthase subunit alpha (Vibrio parahaemolyticus serotype O3:K6 (strain RIMD 2210633)).